The primary structure comprises 187 residues: Adenine phosphoribosyltransferase (187 aa).

Belongs to the purine/pyrimidine phosphoribosyltransferase family. As to quaternary structure, homodimer.

It localises to the cytoplasm. It catalyses the reaction AMP + diphosphate = 5-phospho-alpha-D-ribose 1-diphosphate + adenine. The protein operates within purine metabolism; AMP biosynthesis via salvage pathway; AMP from adenine: step 1/1. Its function is as follows. Catalyzes a salvage reaction resulting in the formation of AMP, that is energically less costly than de novo synthesis. The protein is Adenine phosphoribosyltransferase of Yersinia pseudotuberculosis serotype I (strain IP32953).